The sequence spans 148 residues: Natriuretic peptide BF131 (148 aa).

A signal peptide spans 1–27; sequence MVGPSRLAGGGLLLLLLLALLPLALDG. Residues 28–83 constitute a propeptide that is removed on maturation; the sequence is KPAPPPQALPKDPAAASAAERIMRALLPDSKSSRPATDRMVHPEHQAGGGDTRRLQ. Disordered regions lie at residues 54–83 and 105–127; these read LPDSKSSRPATDRMVHPEHQAGGGDTRRLQ and TSDMGCRHRKDPPRAPPAAPSAA. The span at 63 to 83 shows a compositional bias: basic and acidic residues; it reads ATDRMVHPEHQAGGGDTRRLQ. A disulfide bond links cysteine 94 and cysteine 110. Residues 130-148 constitute a propeptide that is removed on maturation; the sequence is AVTWLIRDLRADSKQSRAA.

Belongs to the natriuretic peptide family. Expressed by the venom gland.

It is found in the secreted. Natriuretic peptide that dose-dependently induces the rapid relaxation of rat aortic strips phenylephrine-precontracted. Acts by stimulating cGMP production in a dose-dependent manner (by probably activating NPR1 and/or NPR2). May also show potent hypotensive effects. The chain is Natriuretic peptide BF131 from Bungarus flaviceps flaviceps (Red-headed krait).